The chain runs to 490 residues: Katanin p60 ATPase-containing subunit A-like 1 (490 aa).

Methionine 1 carries the post-translational modification N-acetylmethionine. The interval proline 96–aspartate 182 is disordered. The span at proline 116–methionine 127 shows a compositional bias: basic and acidic residues. Residues alanine 128–alanine 139 show a composition bias toward low complexity. The segment covering serine 143–methionine 169 has biased composition (basic and acidic residues). Phosphoserine is present on serine 174. Glycine 248–threonine 255 is an ATP binding site.

It belongs to the AAA ATPase family. Katanin p60 subunit A1 subfamily. A-like 1 sub-subfamily. Interacts with KATNB1 and KATNBL1.

It is found in the cytoplasm. Its subcellular location is the cytoskeleton. The protein resides in the spindle pole. The protein localises to the spindle. It catalyses the reaction n ATP + n H2O + a microtubule = n ADP + n phosphate + (n+1) alpha/beta tubulin heterodimers.. Regulates microtubule dynamics in Sertoli cells, a process that is essential for spermiogenesis and male fertility. Severs microtubules in an ATP-dependent manner, promoting rapid reorganization of cellular microtubule arrays. Has microtubule-severing activity in vitro. This is Katanin p60 ATPase-containing subunit A-like 1 from Oryctolagus cuniculus (Rabbit).